The chain runs to 739 residues: Adenosylcobalamin-dependent ribonucleoside-triphosphate reductase (739 aa).

An intrachain disulfide couples Cys-119 to Cys-419. Positions 147–158 (SMPFSFLFDELM) are effector region-1. An effector region-2 region spans residues 168–313 (ARSNISQIPR…ICNLIGKAVV (146 aa)). Catalysis depends on residues Cys-408 and Glu-410. Residues 565 to 626 (FHYGAYLIQR…NPNFASAGTV (62 aa)) are adenosylcobalamin-binding-1. Residues 685-724 (LQQAPKEPIDKETYEKRSQEITGNVEEVFSQLNSDVKDLE) form an adenosylcobalamin-binding-2 region.

This sequence belongs to the class II ribonucleoside-triphosphate reductase family. Monomer. It depends on adenosylcob(III)alamin as a cofactor.

It carries out the reaction a 2'-deoxyribonucleoside 5'-triphosphate + [thioredoxin]-disulfide + H2O = a ribonucleoside 5'-triphosphate + [thioredoxin]-dithiol. Allosterically regulated by ATP and dNTP. This is Adenosylcobalamin-dependent ribonucleoside-triphosphate reductase (rtpR) from Lactobacillus delbrueckii subsp. bulgaricus (strain ATCC 11842 / DSM 20081 / BCRC 10696 / JCM 1002 / NBRC 13953 / NCIMB 11778 / NCTC 12712 / WDCM 00102 / Lb 14).